We begin with the raw amino-acid sequence, 225 residues long: Imidazole glycerol phosphate synthase subunit HisH (225 aa).

A Glutamine amidotransferase type-1 domain is found at 5–220 (KNVIVDTGCA…LELDSTELNQ (216 aa)). Cys80 (nucleophile) is an active-site residue. Active-site residues include His195 and Glu197.

In terms of assembly, heterodimer of HisH and HisF.

Its subcellular location is the cytoplasm. It carries out the reaction 5-[(5-phospho-1-deoxy-D-ribulos-1-ylimino)methylamino]-1-(5-phospho-beta-D-ribosyl)imidazole-4-carboxamide + L-glutamine = D-erythro-1-(imidazol-4-yl)glycerol 3-phosphate + 5-amino-1-(5-phospho-beta-D-ribosyl)imidazole-4-carboxamide + L-glutamate + H(+). It catalyses the reaction L-glutamine + H2O = L-glutamate + NH4(+). Its pathway is amino-acid biosynthesis; L-histidine biosynthesis; L-histidine from 5-phospho-alpha-D-ribose 1-diphosphate: step 5/9. Its function is as follows. IGPS catalyzes the conversion of PRFAR and glutamine to IGP, AICAR and glutamate. The HisH subunit catalyzes the hydrolysis of glutamine to glutamate and ammonia as part of the synthesis of IGP and AICAR. The resulting ammonia molecule is channeled to the active site of HisF. The chain is Imidazole glycerol phosphate synthase subunit HisH from Colwellia psychrerythraea (strain 34H / ATCC BAA-681) (Vibrio psychroerythus).